A 505-amino-acid polypeptide reads, in one-letter code: RNA-splicing ligase RtcB homolog (505 aa).

4 residues coordinate Mn(2+): Asp-119, Cys-122, His-227, and His-259. 226-230 (NHYAE) lines the GMP pocket. The residue at position 300 (Ser-300) is a Phosphoserine. His-353 lines the Mn(2+) pocket. GMP is bound by residues 353-354 (HN), 402-405 (GGTM), Ser-409, and 428-431 (HGAG). Residue His-428 is the GMP-histidine intermediate of the active site. A Glycyl lysine isopeptide (Lys-Gly) (interchain with G-Cter in SUMO2) cross-link involves residue Lys-496. Lys-504 lines the GMP pocket.

The protein belongs to the RtcB family. As to quaternary structure, catalytic component of the tRNA-splicing ligase complex. It depends on Mn(2+) as a cofactor.

The protein resides in the nucleus. It localises to the cytoplasm. The enzyme catalyses a 3'-end 3'-phospho-ribonucleotide-RNA + a 5'-end dephospho-ribonucleoside-RNA + GTP = a ribonucleotidyl-ribonucleotide-RNA + GMP + diphosphate. The catalysed reaction is a 3'-end 2',3'-cyclophospho-ribonucleotide-RNA + a 5'-end dephospho-ribonucleoside-RNA + GTP + H2O = a ribonucleotidyl-ribonucleotide-RNA + GMP + diphosphate + H(+). Its function is as follows. Catalytic subunit of the tRNA-splicing ligase complex that acts by directly joining spliced tRNA halves to mature-sized tRNAs by incorporating the precursor-derived splice junction phosphate into the mature tRNA as a canonical 3',5'-phosphodiester. May act as an RNA ligase with broad substrate specificity, and may function toward other RNAs. This Rattus norvegicus (Rat) protein is RNA-splicing ligase RtcB homolog.